A 437-amino-acid chain; its full sequence is GTPase Der (437 aa).

2 EngA-type G domains span residues Asn-3–Ser-167 and Pro-176–Met-352. GTP is bound by residues Gly-9–Ser-16, Asp-56–Trp-60, Asn-119–Asp-122, Gly-182–Ser-189, Asp-229–Ile-233, and Asn-294–Asp-297. Residues Ile-353 to Lys-437 form the KH-like domain.

Belongs to the TRAFAC class TrmE-Era-EngA-EngB-Septin-like GTPase superfamily. EngA (Der) GTPase family. Associates with the 50S ribosomal subunit.

In terms of biological role, GTPase that plays an essential role in the late steps of ribosome biogenesis. The protein is GTPase Der of Bacteroides fragilis (strain ATCC 25285 / DSM 2151 / CCUG 4856 / JCM 11019 / LMG 10263 / NCTC 9343 / Onslow / VPI 2553 / EN-2).